The following is a 247-amino-acid chain: Pulmonary surfactant-associated protein A (247 aa).

The N-terminal stretch at 1 to 19 (MWCSLALILILVTVSGIMC) is a signal peptide. Asn20 carries N-linked (GlcNAc...) asparagine glycosylation. Residues 27–99 (GSPGIPGTPG…PGERGPPGLP (73 aa)) form the Collagen-like domain. A 4-hydroxyproline mark is found at Pro29, Pro32, Pro35, Pro41, Pro53, Pro56, Pro62, Pro66, and Pro69. Residues 32-101 (PGTPGSHGLP…ERGPPGLPAS (70 aa)) are disordered. Residues 41-50 (PGRDGRDGVK) show a composition bias toward basic and acidic residues. The span at 53-64 (PGPPGPMGPPGV) shows a compositional bias: pro residues. A compositionally biased stretch (basic and acidic residues) spans 83–92 (ERGDKGDPGE). A C-type lectin domain is found at 131–247 (LAVGDKVFAT…LQSRLTICEF (117 aa)). Cystine bridges form between Cys154–Cys245 and Cys223–Cys237. Asn206 carries N-linked (GlcNAc...) asparagine glycosylation. Glu214, Arg216, Asn233, and Asp234 together coordinate Ca(2+).

Belongs to the SFTPA family. Oligomeric complex of 6 set of homotrimers.

The protein localises to the secreted. The protein resides in the extracellular space. It localises to the extracellular matrix. It is found in the surface film. In presence of calcium ions, it binds to surfactant phospholipids and contributes to lower the surface tension at the air-liquid interface in the alveoli of the mammalian lung and is essential for normal respiration. Enhances the expression of MYO18A/SP-R210 on alveolar macrophages. The sequence is that of Pulmonary surfactant-associated protein A (SFTPA1) from Cavia porcellus (Guinea pig).